The following is a 189-amino-acid chain: Glucose-6-phosphate isomerase (189 aa).

Fe cation contacts are provided by histidine 88, histidine 90, glutamate 97, and histidine 136.

This sequence belongs to the archaeal-type GPI family. As to quaternary structure, homodimer. Requires Fe cation as cofactor.

It is found in the cytoplasm. It carries out the reaction alpha-D-glucose 6-phosphate = beta-D-fructose 6-phosphate. Its pathway is carbohydrate degradation; glycolysis; D-glyceraldehyde 3-phosphate and glycerone phosphate from D-glucose: step 2/4. In Pyrococcus abyssi (strain GE5 / Orsay), this protein is Glucose-6-phosphate isomerase (pgiA).